We begin with the raw amino-acid sequence, 340 residues long: Armadillo repeat-containing protein 12 (340 aa).

Residues 1–101 are interaction with TBC1D15; it reads MGKSIPQYLG…SITRCVYLLE (101 aa). 3 ARM repeats span residues 100 to 139, 179 to 218, and 278 to 318; these read LEAE…AFSG, LPDY…YLAQ, and SLHE…SLQY.

As to quaternary structure, interacts with TBC1D15, TBC1D21, GK2 and IMMT. Interacts with VDAC2 and VDAC3 in a TBC1D21-dependent manner. Interacts (via ARM domains) with RBBP4. As to expression, expressed in testis. Highly expressed in the mid-piece of the elongated and late spermatids. Expressed at higher levels in neuroblastoma tissues and cell lines, than those of normal dorsal ganglia (at protein level). Expressed in breast cancer, colon cancer, hepatocellular carcinoma, lung cancer, pancreas cancer, prostate cancer, renal cancer and gastric cancer, but not in their normal counterparts.

The protein localises to the nucleus. The protein resides in the mitochondrion outer membrane. In terms of biological role, essential for male fertility and sperm mitochondrial sheath formation. Required for proper mitochondrial elongation and coiling along the flagellum during the formation of the mitochondrial sheath. Facilitates the growth and aggressiveness of neuroblastoma cells. Increases the EZH2 activity and H3K27me3 levels in a RBBP4-dependent manner, and facilitates the enrichment of polycomb repressive complex 2 and H3K27me3 on gene promoters, resulting in transcriptional repression of tumor suppressors affecting the proliferation, invasion, and metastasis of tumor cells. In Homo sapiens (Human), this protein is Armadillo repeat-containing protein 12 (ARMC12).